A 415-amino-acid polypeptide reads, in one-letter code: Lupus La protein homolog (415 aa).

One can recognise an HTH La-type RNA-binding domain in the interval 7 to 99; sequence NEKMTALEAK…RRSPSRPLPE (93 aa). 2 positions are modified to phosphoserine: Ser92 and Ser94. An RRM domain is found at 111 to 187; the sequence is RSVYIKGFPT…TNLLILFKED (77 aa). Lys116 is subject to N6-acetyllysine. Thr120 is modified (phosphothreonine). An N6-acetyllysine mark is found at Lys128, Lys327, and Lys356. Residues 226–346 enclose the xRRM domain; it reads EGKMGCLLKF…GRFKGSHVFT (121 aa). Positions 349–415 are disordered; the sequence is RRFKGKGKGN…KKRENGARDK (67 aa). Phosphothreonine is present on Thr377. Residues 377–415 are compositionally biased toward basic and acidic residues; the sequence is TRFDDDDRRRGPMKRGRDGRDREEPASKHKKRENGARDK.

In terms of assembly, interacts with DDX15. May interact with RUFY1. Phosphorylated.

The protein localises to the nucleus. Binds to the 3' poly(U) terminus of nascent RNA polymerase III transcripts, protecting them from exonuclease digestion and facilitating their folding and maturation. The sequence is that of Lupus La protein homolog (Ssb) from Mus musculus (Mouse).